Reading from the N-terminus, the 289-residue chain is Acetylglutamate kinase (289 aa).

Residues 60 to 61 (GG), R82, and N186 contribute to the substrate site.

Belongs to the acetylglutamate kinase family. ArgB subfamily.

It is found in the cytoplasm. The catalysed reaction is N-acetyl-L-glutamate + ATP = N-acetyl-L-glutamyl 5-phosphate + ADP. The protein operates within amino-acid biosynthesis; L-arginine biosynthesis; N(2)-acetyl-L-ornithine from L-glutamate: step 2/4. Functionally, catalyzes the ATP-dependent phosphorylation of N-acetyl-L-glutamate. The polypeptide is Acetylglutamate kinase (Methanoculleus marisnigri (strain ATCC 35101 / DSM 1498 / JR1)).